The sequence spans 358 residues: Peptide chain release factor 1 (358 aa).

An N5-methylglutamine modification is found at Gln233.

It belongs to the prokaryotic/mitochondrial release factor family. Post-translationally, methylated by PrmC. Methylation increases the termination efficiency of RF1.

The protein localises to the cytoplasm. Its function is as follows. Peptide chain release factor 1 directs the termination of translation in response to the peptide chain termination codons UAG and UAA. This chain is Peptide chain release factor 1, found in Lysinibacillus sphaericus (strain C3-41).